The following is a 302-amino-acid chain: Probable alpha-L-glutamate ligase (302 aa).

The region spanning 104–287 is the ATP-grasp domain; the sequence is MQLLSREGVG…VAGMIIEFIE (184 aa). ATP-binding positions include Lys141, 178–179, Asp187, and 211–213; these read EF and RSN. Positions 248, 260, and 262 each coordinate Mg(2+). Mn(2+) is bound by residues Asp248, Glu260, and Asn262.

Belongs to the RimK family. It depends on Mg(2+) as a cofactor. Mn(2+) is required as a cofactor.

The sequence is that of Probable alpha-L-glutamate ligase from Halorhodospira halophila (strain DSM 244 / SL1) (Ectothiorhodospira halophila (strain DSM 244 / SL1)).